The sequence spans 319 residues: Coiled-coil domain-containing protein 149 (319 aa).

Coiled coils occupy residues 1 to 199 (MANQ…RKNS) and 259 to 286 (IQHQ…LEVS). The chain crosses the membrane as a helical span at residues 298–318 (VSIGFGSMFFLKYLCLWLIAV).

Belongs to the CCDC149 family.

Its subcellular location is the membrane. This is Coiled-coil domain-containing protein 149 (CCDC149) from Bos taurus (Bovine).